Consider the following 89-residue polypeptide: Large ribosomal subunit protein bL27 (89 aa).

A disordered region spans residues 1-26 (MATKKAGGSSKNGRDSAGRRLGLKKS).

This sequence belongs to the bacterial ribosomal protein bL27 family.

In Orientia tsutsugamushi (strain Ikeda) (Rickettsia tsutsugamushi), this protein is Large ribosomal subunit protein bL27.